We begin with the raw amino-acid sequence, 522 residues long: Ribonuclease Y (522 aa).

Residues 7–27 (STILYCLFFFFLGIAAVLAFI) form a helical membrane-spanning segment. The KH domain occupies 212 to 272 (TTSTVGVPTD…VRREVARMSL (61 aa)). The region spanning 338–431 (VLRHSVEVAF…VATADACSAS (94 aa)) is the HD domain.

Belongs to the RNase Y family.

The protein resides in the cell membrane. Functionally, endoribonuclease that initiates mRNA decay. This chain is Ribonuclease Y, found in Rhodopirellula baltica (strain DSM 10527 / NCIMB 13988 / SH1).